The following is a 643-amino-acid chain: Phosphomethylpyrimidine synthase (643 aa).

Substrate contacts are provided by residues Asn-248, Met-277, Tyr-306, His-342, 362-364 (SRG), 403-406 (DGLR), and Glu-442. His-446 serves as a coordination point for Zn(2+). Tyr-469 contacts substrate. His-510 contacts Zn(2+). Residues Cys-590, Cys-593, and Cys-598 each coordinate [4Fe-4S] cluster.

It belongs to the ThiC family. As to quaternary structure, homodimer. [4Fe-4S] cluster serves as cofactor.

The catalysed reaction is 5-amino-1-(5-phospho-beta-D-ribosyl)imidazole + S-adenosyl-L-methionine = 4-amino-2-methyl-5-(phosphooxymethyl)pyrimidine + CO + 5'-deoxyadenosine + formate + L-methionine + 3 H(+). The protein operates within cofactor biosynthesis; thiamine diphosphate biosynthesis. Its function is as follows. Catalyzes the synthesis of the hydroxymethylpyrimidine phosphate (HMP-P) moiety of thiamine from aminoimidazole ribotide (AIR) in a radical S-adenosyl-L-methionine (SAM)-dependent reaction. This chain is Phosphomethylpyrimidine synthase, found in Paraburkholderia phymatum (strain DSM 17167 / CIP 108236 / LMG 21445 / STM815) (Burkholderia phymatum).